A 512-amino-acid chain; its full sequence is Tyrosine-protein kinase Lyn (512 aa).

The disordered stretch occupies residues 1–62; the sequence is MGCIKSKGKD…GQRFQTKDPE (62 aa). A lipid anchor (N-myristoyl glycine) is attached at Gly-2. Residue Cys-3 is the site of S-palmitoyl cysteine attachment. Residues Ser-11 and Ser-13 each carry the phosphoserine modification. Residues 63-123 enclose the SH3 domain; it reads EQGDIVVALY…PSNYVAKLNT (61 aa). Residues 129–226 form the SH2 domain; that stretch reads WFFKDITRKD…GLCRRLEKAC (98 aa). Residue Tyr-193 is modified to Phosphotyrosine. Ser-228 carries the post-translational modification Phosphoserine. In terms of domain architecture, Protein kinase spans 247 to 501; it reads IKLVKRLGAG…YLQSVLDDFY (255 aa). ATP is bound by residues 253 to 261 and Lys-275; that span reads LGAGQFGEV. Tyr-306 and Tyr-316 each carry phosphotyrosine. The Proton acceptor role is filled by Asp-367. Phosphotyrosine; by autocatalysis is present on Tyr-397. A phosphotyrosine mark is found at Tyr-460 and Tyr-473. Residue Tyr-508 is modified to Phosphotyrosine; by autocatalysis, CSK and MATK.

This sequence belongs to the protein kinase superfamily. Tyr protein kinase family. SRC subfamily. Interacts with TEC. Interacts (via SH2 domain) with FLT3 (tyrosine phosphorylated). Interacts with LIME1 and with CD79A upon activation of the B-cell antigen receptor. Interacts with the B-cell receptor complex. Interacts with phosphorylated THEMIS2. Interacts with EPOR. Interacts with MS4A2/FCER1B. Interaction (via the SH2 and SH3 domains) with MUC1 is stimulated by IL7 and the subsequent phosphorylation increases the binding between MUC1 and CTNNB1/beta-catenin. Interacts with ADAM15. Interacts with NDFIP2 and more weakly with NDFIP1. Interacts with FASLG. Interacts with KIT. Interacts with HCLS1. Interacts with FCGR2B. Interacts with FCGR1A; the interaction may be indirect. Interacts with CD19, CD22, CD79A and CD79B. Interacts (via SH3 domain) with CBLC, PPP1R15A and PDE4A. Interacts with TGFB1I1. Interacts (via SH3 domain) with PIK3R1, the regulatory subunit of phosphatidylinositol 3-kinase; this interaction enhances phosphatidylinositol 3-kinase activity. Interacts with CSF2RB, the common subunit of the IL3, IL5 and CSF2 receptors. Interacts with PAG1; identified in a complex with PAG1 and STAT3. Interacts with ABL1. Interacts with PTPN6/SHP-1. Interacts (via SH3 domain) with SCIMP (via proline-rich region). This interaction facilitates the phosphorylation of SCIMP on 'Tyr-107', which enhances binding of SCIMP to TLR4, and consequently the phosphorylation of TLR4 in response to stimulation by lipopolysaccharide in macrophages. Interacts with LPXN (via LD motif 3) and the interaction is induced upon B-cell antigen receptor (BCR) activation. Interacts (via SH3-domain) with ANKRD54 (via ankyrin repeat region) in an activation-independent status of LYN. Forms a multiprotein complex with ANKRD54 and HCLS1. Interacts (via SH2 and SH3 domains) with UNC119; leading to LYN activation. Interacts with CD36. Interacts with LYN. Interacts with SKAP1 and FYB1; this interaction promotes the phosphorylation of CLNK. Interacts with BCAR1/CAS and NEDD9/HEF1. In terms of assembly, (Microbial infection) Interacts with Epstein-Barr virus LMP2A. As to quaternary structure, (Microbial infection) Interacts with Herpes virus saimiri tyrosine kinase interacting protein (Tip). Ubiquitinated by CBL, leading to its degradation. Ubiquitination is SH3-dependent. In terms of processing, autophosphorylated. Phosphorylated on tyrosine residues in response to KIT signaling. Phosphorylation at Tyr-397 is required for optimal activity. Phosphorylation at Tyr-508 inhibits kinase activity. Phosphorylated at Tyr-508 by CSK. Dephosphorylated by PTPRC/CD45. Becomes rapidly phosphorylated upon activation of the B-cell receptor and the immunoglobulin receptor FCGR1A. Phosphorylated in response to ITGB1 in B-cells. Detected in monocytes (at protein level). Detected in placenta, and in fetal brain, lung, liver and kidney. Widely expressed in a variety of organs, tissues, and cell types such as epidermoid, hematopoietic, and neuronal cells. Expressed in primary neuroblastoma tumors.

Its subcellular location is the cell membrane. It is found in the nucleus. The protein localises to the cytoplasm. It localises to the perinuclear region. The protein resides in the golgi apparatus. Its subcellular location is the membrane. The catalysed reaction is L-tyrosyl-[protein] + ATP = O-phospho-L-tyrosyl-[protein] + ADP + H(+). Its activity is regulated as follows. Subject to autoinhibition, mediated by intramolecular interactions between the SH2 domain and the C-terminal phosphotyrosine. Phosphorylation at Tyr-397 is required for optimal activity. Phosphorylated by CSK at Tyr-508; phosphorylation at Tyr-508 inhibits kinase activity. Kinase activity is modulated by dephosphorylation by PTPRC/CD45. Inhibited by Dasatinib, PP2, and SU6656. Non-receptor tyrosine-protein kinase that transmits signals from cell surface receptors and plays an important role in the regulation of innate and adaptive immune responses, hematopoiesis, responses to growth factors and cytokines, integrin signaling, but also responses to DNA damage and genotoxic agents. Functions primarily as negative regulator, but can also function as activator, depending on the context. Required for the initiation of the B-cell response, but also for its down-regulation and termination. Plays an important role in the regulation of B-cell differentiation, proliferation, survival and apoptosis, and is important for immune self-tolerance. Acts downstream of several immune receptors, including the B-cell receptor, CD79A, CD79B, CD5, CD19, CD22, FCER1, FCGR2, FCGR1A, TLR2 and TLR4. Plays a role in the inflammatory response to bacterial lipopolysaccharide. Mediates the responses to cytokines and growth factors in hematopoietic progenitors, platelets, erythrocytes, and in mature myeloid cells, such as dendritic cells, neutrophils and eosinophils. Acts downstream of EPOR, KIT, MPL, the chemokine receptor CXCR4, as well as the receptors for IL3, IL5 and CSF2. Plays an important role in integrin signaling. Regulates cell proliferation, survival, differentiation, migration, adhesion, degranulation, and cytokine release. Involved in the regulation of endothelial activation, neutrophil adhesion and transendothelial migration. Down-regulates signaling pathways by phosphorylation of immunoreceptor tyrosine-based inhibitory motifs (ITIM), that then serve as binding sites for phosphatases, such as PTPN6/SHP-1, PTPN11/SHP-2 and INPP5D/SHIP-1, that modulate signaling by dephosphorylation of kinases and their substrates. Phosphorylates LIME1 in response to CD22 activation. Phosphorylates BTK, CBL, CD5, CD19, CD72, CD79A, CD79B, CSF2RB, DOK1, HCLS1, LILRB3/PIR-B, MS4A2/FCER1B, SYK and TEC. Promotes phosphorylation of SIRPA, PTPN6/SHP-1, PTPN11/SHP-2 and INPP5D/SHIP-1. Mediates phosphorylation of the BCR-ABL fusion protein. Required for rapid phosphorylation of FER in response to FCER1 activation. Mediates KIT phosphorylation. Acts as an effector of EPOR (erythropoietin receptor) in controlling KIT expression and may play a role in erythroid differentiation during the switch between proliferation and maturation. Depending on the context, activates or inhibits several signaling cascades. Regulates phosphatidylinositol 3-kinase activity and AKT1 activation. Regulates activation of the MAP kinase signaling cascade, including activation of MAP2K1/MEK1, MAPK1/ERK2, MAPK3/ERK1, MAPK8/JNK1 and MAPK9/JNK2. Mediates activation of STAT5A and/or STAT5B. Phosphorylates LPXN on 'Tyr-72'. Kinase activity facilitates TLR4-TLR6 heterodimerization and signal initiation. Phosphorylates SCIMP on 'Tyr-107'; this enhances binding of SCIMP to TLR4, promoting the phosphorylation of TLR4, and a selective cytokine response to lipopolysaccharide in macrophages. Phosphorylates CLNK. Phosphorylates BCAR1/CAS and NEDD9/HEF1. In Homo sapiens (Human), this protein is Tyrosine-protein kinase Lyn (LYN).